Reading from the N-terminus, the 415-residue chain is Serine hydroxymethyltransferase (415 aa).

Residues L117 and 121–123 each bind (6S)-5,6,7,8-tetrahydrofolate; that span reads GHL. K226 carries the N6-(pyridoxal phosphate)lysine modification. (6S)-5,6,7,8-tetrahydrofolate contacts are provided by residues E241 and 349–351; that span reads SPF.

Belongs to the SHMT family. In terms of assembly, homodimer. Requires pyridoxal 5'-phosphate as cofactor.

The protein localises to the cytoplasm. The enzyme catalyses (6R)-5,10-methylene-5,6,7,8-tetrahydrofolate + glycine + H2O = (6S)-5,6,7,8-tetrahydrofolate + L-serine. It functions in the pathway one-carbon metabolism; tetrahydrofolate interconversion. The protein operates within amino-acid biosynthesis; glycine biosynthesis; glycine from L-serine: step 1/1. Its function is as follows. Catalyzes the reversible interconversion of serine and glycine with tetrahydrofolate (THF) serving as the one-carbon carrier. This reaction serves as the major source of one-carbon groups required for the biosynthesis of purines, thymidylate, methionine, and other important biomolecules. Also exhibits THF-independent aldolase activity toward beta-hydroxyamino acids, producing glycine and aldehydes, via a retro-aldol mechanism. The polypeptide is Serine hydroxymethyltransferase (Geotalea daltonii (strain DSM 22248 / JCM 15807 / FRC-32) (Geobacter daltonii)).